A 547-amino-acid chain; its full sequence is Chaperonin GroEL (547 aa).

ATP is bound by residues 30–33 (TLGP), Lys51, 87–91 (DGTTT), Gly415, 479–481 (NAA), and Asp495.

Belongs to the chaperonin (HSP60) family. In terms of assembly, forms a cylinder of 14 subunits composed of two heptameric rings stacked back-to-back. Interacts with the co-chaperonin GroES.

The protein resides in the cytoplasm. The catalysed reaction is ATP + H2O + a folded polypeptide = ADP + phosphate + an unfolded polypeptide.. Functionally, together with its co-chaperonin GroES, plays an essential role in assisting protein folding. The GroEL-GroES system forms a nano-cage that allows encapsulation of the non-native substrate proteins and provides a physical environment optimized to promote and accelerate protein folding. The polypeptide is Chaperonin GroEL (Bordetella bronchiseptica (strain ATCC BAA-588 / NCTC 13252 / RB50) (Alcaligenes bronchisepticus)).